Here is a 2315-residue protein sequence, read N- to C-terminus: MRILKRFLACIQLLCVCRLDWANGYYRQQRKLVEEIGWSYTGALNQKNWGKKYPTCNSPKQSPINIDEDLTQVNVNLKKLKFQGWDKTSLENTFIHNTGKTVEINLTNDYRVSGGVSEMVFKASKITFHWGKCNMSSDGSEHSLEGQKFPLEMQIYCFDADRFSSFEEAVKGKGKLRALSILFEVGTEENLDFKAIIDGVESVSRFGKQAALDPFILLNLLPNSTDKYYIYNGSLTSPPCTDTVDWIVFKDTVSISESQLAVFCEVLTMQQSGYVMLMDYLQNNFREQQYKFSRQVFSSYTGKEEIHEAVCSSEPENVQADPENYTSLLVTWERPRVVYDTMIEKFAVLYQQLDGEDQTKHEFLTDGYQDLGAILNNLLPNMSYVLQIVAICTNGLYGKYSDQLIVDMPTDNPELDLFPELIGTEEIIKEEEEGKDIEEGAIVNPGRDSATNQIRKKEPQISTTTHYNRIGTKYNEAKTNRSPTRGSEFSGKGDVPNTSLNSTSQPVTKLATEKDISLTSQTVTELPPHTVEGTSASLNDGSKTVLRSPHMNLSGTAESLNTVSITEYEEESLLTSFKLDTGAEDSSGSSPATSAIPFISENISQGYIFSSENPETITYDVLIPESARNASEDSTSSGSEESLKDPSMEGNVWFPSSTDITAQPDVGSGRESFLQTNYTEIRVDESEKTTKSFSAGPVMSQGPSVTDLEMPHYSTFAYFPTEVTPHAFTPSSRQQDLVSTVNVVYSQTTQPVYNGETPLQPSYSSEVFPLVTPLLLDNQILNTTPAASSSDSALHATPVFPSVDVSFESILSSYDGAPLLPFSSASFSSELFRHLHTVSQILPQVTSATESDKVPLHASLPVAGGDLLLEPSLAQYSDVLSTTHAASETLEFGSESGVLYKTLMFSQVEPPSSDAMMHARSSGPEPSYALSDNEGSQHIFTVSYSSAIPVHDSVGVTYQGSLFSGPSHIPIPKSSLITPTASLLQPTHALSGDGEWSGASSDSEFLLPDTDGLTALNISSPVSVAEFTYTTSVFGDDNKALSKSEIIYGNETELQIPSFNEMVYPSESTVMPNMYDNVNKLNASLQETSVSISSTKGMFPGSLAHTTTKVFDHEISQVPENNFSVQPTHTVSQASGDTSLKPVLSANSEPASSDPASSEMLSPSTQLLFYETSASFSTEVLLQPSFQASDVDTLLKTVLPAVPSDPILVETPKVDKISSTMLHLIVSNSASSENMLHSTSVPVFDVSPTSHMHSASLQGLTISYASEKYEPVLLKSESSHQVVPSLYSNDELFQTANLEINQAHPPKGRHVFATPVLSIDEPLNTLINKLIHSDEILTSTKSSVTGKVFAGIPTVASDTFVSTDHSVPIGNGHVAITAVSPHRDGSVTSTKLLFPSKATSELSHSAKSDAGLVGGGEDGDTDDDGDDDDDDRGSDGLSIHKCMSCSSYRESQEKVMNDSDTHENSLMDQNNPISYSLSENSEEDNRVTSVSSDSQTGMDRSPGKSPSANGLSQKHNDGKEENDIQTGSALLPLSPESKAWAVLTSDEESGSGQGTSDSLNENETSTDFSFADTNEKDADGILAAGDSEITPGFPQSPTSSVTSENSEVFHVSEAEASNSSHESRIGLAEGLESEKKAVIPLVIVSALTFICLVVLVGILIYWRKCFQTAHFYLEDSTSPRVISTPPTPIFPISDDVGAIPIKHFPKHVADLHASSGFTEEFETLKEFYQEVQSCTVDLGITADSSNHPDNKHKNRYINIVAYDHSRVKLAQLAEKDGKLTDYINANYVDGYNRPKAYIAAQGPLKSTAEDFWRMIWEHNVEVIVMITNLVEKGRRKCDQYWPADGSEEYGNFLVTQKSVQVLAYYTVRNFTLRNTKIKKGSQKGRPSGRVVTQYHYTQWPDMGVPEYSLPVLTFVRKAAYAKRHAVGPVVVHCSAGVGRTGTYIVLDSMLQQIQHEGTVNIFGFLKHIRSQRNYLVQTEEQYVFIHDTLVEAILSKETEVLDSHIHAYVNALLIPGPAGKTKLEKQFQLLSQSNIQQSDYSAALKQCNREKNRTSSIIPVERSRVGISSLSGEGTDYINASYIMGYYQSNEFIITQHPLLHTIKDFWRMIWDHNAQLVVMIPDGQNMAEDEFVYWPNKDEPINCESFKVTLMAEEHKCLSNEEKLIIQDFILEATQDDYVLEVRHFQCPKWPNPDSPISKTFELISVIKEEAANRDGPMIVHDEHGGVTAGTFCALTTLMHQLEKENSVDVYQVAKMINLMRPGVFADIEQYQFLYKVILSLVSTRQEENPSTSLDSNGAALPDGNIAESLESLV.

A signal peptide spans 1-24 (MRILKRFLACIQLLCVCRLDWANG). At 25 to 1636 (YYRQQRKLVE…LAEGLESEKK (1612 aa)) the chain is on the extracellular side. Residues 36-300 (IGWSYTGALN…KFSRQVFSSY (265 aa)) form the Alpha-carbonic anhydrase domain. 2 disulfide bridges follow: cysteine 56-cysteine 240 and cysteine 133-cysteine 264. 6 N-linked (GlcNAc...) asparagine glycosylation sites follow: asparagine 105, asparagine 134, asparagine 223, asparagine 232, asparagine 324, and asparagine 381. Positions 314–413 (EPENVQADPE…LIVDMPTDNP (100 aa)) constitute a Fibronectin type-III domain. 2 disordered regions span residues 442–462 (IVNP…PQIS) and 477–507 (AKTN…SQPV). Residues 496 to 507 (PNTSLNSTSQPV) are compositionally biased toward polar residues. N-linked (GlcNAc...) asparagine glycosylation is found at asparagine 497, asparagine 501, and asparagine 552. Serine 587 carries an O-linked (Xyl...) (chondroitin sulfate) serine glycan. Residues asparagine 602 and asparagine 629 are each glycosylated (N-linked (GlcNAc...) asparagine). Residues 628-650 (RNASEDSTSSGSEESLKDPSMEG) are disordered. At serine 637 the chain carries Phosphoserine; alternate. A glycan (O-linked (Xyl...) (chondroitin sulfate) serine; alternate) is linked at serine 637. Serine 639 carries the phosphoserine modification. A glycan (N-linked (GlcNAc...) asparagine) is linked at asparagine 677. O-linked (Xyl...) (chondroitin sulfate) serine glycosylation occurs at serine 997. Residues asparagine 1017, asparagine 1050, asparagine 1082, and asparagine 1122 are each glycosylated (N-linked (GlcNAc...) asparagine). Residues 1123–1138 (FSVQPTHTVSQASGDT) are compositionally biased toward polar residues. Disordered regions lie at residues 1123-1160 (FSVQ…SSEM), 1397-1523 (KATS…EEND), 1543-1572 (LTSD…SFAD), and 1584-1621 (AGDS…NSSH). Residues 1145 to 1159 (SANSEPASSDPASSE) are compositionally biased toward low complexity. The segment covering 1417–1432 (EDGDTDDDGDDDDDDR) has biased composition (acidic residues). Over residues 1450-1465 (ESQEKVMNDSDTHENS) the composition is skewed to basic and acidic residues. Asparagine 1457 is a glycosylation site (N-linked (GlcNAc...) asparagine). 2 stretches are compositionally biased toward polar residues: residues 1466 to 1479 (LMDQ…SLSE) and 1487 to 1513 (VTSV…GLSQ). Residues serine 1549 and serine 1551 are each glycosylated (O-linked (Xyl...) (chondroitin sulfate) serine). Composition is skewed to polar residues over residues 1554–1572 (GTSD…SFAD) and 1593–1606 (FPQS…SENS). N-linked (GlcNAc...) asparagine glycosylation is present at asparagine 1562. Asparagine 1618 carries an N-linked (GlcNAc...) asparagine glycan. Residues 1637-1662 (AVIPLVIVSALTFICLVVLVGILIYW) traverse the membrane as a helical segment. Topologically, residues 1663–2315 (RKCFQTAHFY…NIAESLESLV (653 aa)) are cytoplasmic. Threonine 1684 and threonine 1687 each carry phosphothreonine. Tyrosine-protein phosphatase domains follow at residues 1717–1992 (FTEE…LVEA) and 2023–2282 (LEKQ…ILSL). Residues aspartate 1901, 1933-1939 (CSAGVGR), and glutamine 1977 contribute to the substrate site. Catalysis depends on cysteine 1933, which acts as the Phosphocysteine intermediate. At serine 2055 the chain carries Phosphoserine.

Belongs to the protein-tyrosine phosphatase family. Receptor class 5 subfamily. In terms of assembly, the carbonic-anhydrase like domain interacts with CNTN1 (contactin). Interacts with PTN. Interaction with PTN promotes formation of homooligomers; oligomerization impairs phosphatase activity. Interacts (via chondroitin sulfate chains) with MDK (via C-terminal); this interaction is inhibited by PTN; this interaction promotes neuronal migration. In terms of tissue distribution, specifically expressed in the central nervous system, where it is localized in the Purkinje cell layer of the cerebellum, the dentate gyrus, and the subependymal layer of the anterior horn of the lateral ventricle. Developmentally regulated in the brain.

It is found in the cell membrane. Its subcellular location is the secreted. The catalysed reaction is O-phospho-L-tyrosyl-[protein] + H2O = L-tyrosyl-[protein] + phosphate. Functionally, protein tyrosine phosphatase that negatively regulates oligodendrocyte precursor proliferation in the embryonic spinal cord. Required for normal differentiation of the precursor cells into mature, fully myelinating oligodendrocytes. May play a role in protecting oligondendrocytes against apoptosis. May play a role in the establishment of contextual memory, probably via the dephosphorylation of proteins that are part of important signaling cascades. The protein is Receptor-type tyrosine-protein phosphatase zeta (PTPRZ1) of Homo sapiens (Human).